Here is a 234-residue protein sequence, read N- to C-terminus: Triosephosphate isomerase (234 aa).

Substrate is bound at residue 8–10 (NFK). H90 serves as the catalytic Electrophile. The active-site Proton acceptor is E159. Positions 165 and 197 each coordinate substrate.

The protein belongs to the triosephosphate isomerase family. Homodimer.

Its subcellular location is the cytoplasm. It catalyses the reaction D-glyceraldehyde 3-phosphate = dihydroxyacetone phosphate. The protein operates within carbohydrate biosynthesis; gluconeogenesis. It participates in carbohydrate degradation; glycolysis; D-glyceraldehyde 3-phosphate from glycerone phosphate: step 1/1. Involved in the gluconeogenesis. Catalyzes stereospecifically the conversion of dihydroxyacetone phosphate (DHAP) to D-glyceraldehyde-3-phosphate (G3P). The polypeptide is Triosephosphate isomerase (Helicobacter acinonychis (strain Sheeba)).